The sequence spans 382 residues: Kelch domain-containing protein 3 (382 aa).

5 Kelch repeats span residues 25 to 77 (RVYS…PYMR), 88 to 138 (TVLL…VLGK), 139 to 189 (IMYI…TMLG), 191 to 249 (HMYV…GYNG), and 251 to 301 (LYIF…IVGD).

In terms of assembly, component of a CRL2(KLHDC3) complex, also named ECS(KLHDC3) complex, composed of CUL2, Elongin BC (ELOB and ELOC), RBX1 and substrate-specific adapter KLHDC3. May form oligomers as a KLHDC3-ELOB-ELOC complex; this interaction is likely autoinhibitory for the E3 ligase complex.

It localises to the cytoplasm. It functions in the pathway protein modification; protein ubiquitination. Functionally, substrate-recognition component of a Cul2-RING (CRL2) E3 ubiquitin-protein ligase complex of the DesCEND (destruction via C-end degrons) pathway, which recognizes a C-degron located at the extreme C terminus of target proteins, leading to their ubiquitination and degradation. The C-degron recognized by the DesCEND pathway is usually a motif of less than ten residues and can be present in full-length proteins, truncated proteins or proteolytically cleaved forms. The CRL2(KLHDC3) complex specifically recognizes proteins with a glycine (Gly) at the C-terminus, leading to their ubiquitination and degradation: recognizes the C-terminal -Arg-(Xaa)n-Arg-Gly, -Arg-(Xaa)n-Lys-Gly, and -Arg-(Xaa)n-Gln-Gly degrons. The CRL2(KLHDC3) complex mediates ubiquitination and degradation of truncated SELENOV and SEPHS2 selenoproteins produced by failed UGA/Sec decoding, which end with a glycine. May be involved in meiotic recombination process. The protein is Kelch domain-containing protein 3 of Homo sapiens (Human).